The chain runs to 239 residues: Transcriptional regulatory protein BtsR (239 aa).

In terms of domain architecture, Response regulatory spans 3–116 (KVLIVDDEPL…RLEKTLARLR (114 aa)). Residue Asp54 is modified to 4-aspartylphosphate. In terms of domain architecture, HTH LytTR-type spans 137–239 (IPCTGHSRIY…LKSLKEAIGL (103 aa)).

Post-translationally, phosphorylated by BtsS.

Functionally, member of the two-component regulatory system BtsS/BtsR. BtsR regulates expression of btsT by binding to its promoter region. This chain is Transcriptional regulatory protein BtsR, found in Escherichia coli O6:H1 (strain CFT073 / ATCC 700928 / UPEC).